Here is a 335-residue protein sequence, read N- to C-terminus: Transcription factor E2F5 (335 aa).

Low complexity predominate over residues 1–18 (MAAAEPTSSAQPTPQAQA). The disordered stretch occupies residues 1–40 (MAAAEPTSSAQPTPQAQAQPPPHGAPSSQPSAALAGGSSR). Residues 37–108 (GSSRHEKSLG…KNSIQWKGVG (72 aa)) mediate DNA binding. A leucine-zipper region spans residues 66–88 (LKAAADTLAVRQKRRIYDITNVL). A DEF box motif is present at residues 71–108 (DTLAVRQKRRIYDITNVLEGIDLIEKKSKNSIQWKGVG). The dimerization stretch occupies residues 109 to 205 (AGCNTKEVID…GQNGQKKYQI (97 aa)). The tract at residues 226 to 285 (SKPVVFPVPPPDDLTQPSSQSSTSVTPQKSTMAAQNLPEQHVSERSQTFQQTPAAEVSSG) is disordered. Positions 238-256 (DLTQPSSQSSTSVTPQKST) are enriched in low complexity. Positions 277-335 (TPAAEVSSGSISGDIIDELMSSDVFPLLRLSPTPADDYNFNLDDNEGVCDLFDVQILNY) are transactivation. Positions 312 to 329 (DDYNFNLDDNEGVCDLFD) are RBL2 association.

It belongs to the E2F/DP family. Component of the DRTF1/E2F transcription factor complex. Binds cooperatively with DP-1 to E2F sites. Interaction with retinoblastoma protein RB1 or proteins RBL1 and RBL2 inhibits the E2F transactivation domain. Component of the DREAM complex (also named LINC complex) at least composed of E2F4, E2F5, LIN9, LIN37, LIN52, LIN54, MYBL1, MYBL2, RBL1, RBL2, RBBP4, TFDP1 and TFDP2. The complex exists in quiescent cells where it represses cell cycle-dependent genes. It dissociates in S phase when LIN9, LIN37, LIN52 and LIN54 form a subcomplex that binds to MYBL2.

It localises to the nucleus. Functionally, transcriptional activator that binds to E2F sites, these sites are present in the promoter of many genes whose products are involved in cell proliferation. May mediate growth factor-initiated signal transduction. It is likely involved in the early responses of resting cells to growth factor stimulation. Specifically required for multiciliate cell differentiation: together with MCIDAS and E2F5, binds and activate genes required for centriole biogenesis. The chain is Transcription factor E2F5 (E2f5) from Mus musculus (Mouse).